The sequence spans 310 residues: Probable cell division protein WhiA (310 aa).

Positions 277–310 (SLKELAEQVPDGPISKSGVNHRLKKLHEIAENLR) form a DNA-binding region, H-T-H motif.

Belongs to the WhiA family.

Involved in cell division and chromosome segregation. This chain is Probable cell division protein WhiA, found in Lactobacillus delbrueckii subsp. bulgaricus (strain ATCC BAA-365 / Lb-18).